A 319-amino-acid polypeptide reads, in one-letter code: tRNA uridine(34) hydroxylase (319 aa).

The region spanning 127–221 (KQEDTVIIDA…YGKDPEVQGE (95 aa)) is the Rhodanese domain. Cys181 acts as the Cysteine persulfide intermediate in catalysis.

This sequence belongs to the TrhO family.

The catalysed reaction is uridine(34) in tRNA + AH2 + O2 = 5-hydroxyuridine(34) in tRNA + A + H2O. In terms of biological role, catalyzes oxygen-dependent 5-hydroxyuridine (ho5U) modification at position 34 in tRNAs. This Bacillus cereus (strain Q1) protein is tRNA uridine(34) hydroxylase.